The primary structure comprises 679 residues: Enzymatic polyprotein (679 aa).

Positions Leu40–Asp130 are protease. Asp45 is a catalytic residue. Residues Leu272–Ile452 form the Reverse transcriptase domain.

It belongs to the caulimoviridae enzymatic polyprotein family.

It catalyses the reaction DNA(n) + a 2'-deoxyribonucleoside 5'-triphosphate = DNA(n+1) + diphosphate. Encodes for at least two polypeptides: protease (PR) and reverse transcriptase (RT). The protease processes the polyprotein in cis. Reverse transcriptase is multifunctional enzyme that converts the viral RNA genome into dsDNA in viral cytoplasmic capsids. This enzyme displays a DNA polymerase activity that can copy either DNA or RNA templates, and a ribonuclease H (RNase H) activity that cleaves the RNA strand of RNA-DNA heteroduplexes in a partially processive 3'- to 5'-endonucleasic mode. Neo-synthesized pregenomic RNA (pgRNA) are encapsidated, and reverse-transcribed inside the nucleocapsid. Partial (+)DNA is synthesized from the (-)DNA template and generates the relaxed circular DNA (RC-DNA) genome. After budding and infection, the RC-DNA migrates in the nucleus, and is converted into a plasmid-like covalently closed circular DNA (cccDNA). The sequence is that of Enzymatic polyprotein from Cauliflower mosaic virus (strain CM-1841) (CaMV).